Here is a 306-residue protein sequence, read N- to C-terminus: uncharacterized protein (306 aa).

Helical transmembrane passes span 13–33 (VLLSQFLNGYEWAVPWIFAFI), 53–73 (PLPMILALFVLHIFMPLFAWG), 86–106 (ITGLTLAVVIPTGITSLIWAA), 112–132 (VGLTLSIILVDTVLSPLIVPL), 147–167 (WGMMKGLIVMVVIPSFLGMLF), 177–197 (AFVSSALSPFSKLCLMAVIAI), 214–234 (AGIAVTVFFIALTGYAAAWLI), 246–268 (VSLIFTGGMRNISAGAVLAVTFF), and 272–294 (VAVPVVIGMLFQQILAALFGYML).

It is found in the cell membrane. This is an uncharacterized protein from Bacillus subtilis (strain 168).